We begin with the raw amino-acid sequence, 266 residues long: Phosphoethanolamine N-methyltransferase (266 aa).

Residue Q18 coordinates phosphoethanolamine. Y19 is a catalytic residue. Y27 provides a ligand contact to phosphoethanolamine. The S-adenosyl-L-methionine site is built by I36, S37, G63, D85, I86, D110, I111, and R127. The active site involves H132. Phosphoethanolamine contacts are provided by Y160, Y175, R179, Y181, and K247.

This sequence belongs to the class I-like SAM-binding methyltransferase superfamily. PEAMT family. Monomer.

The protein localises to the golgi apparatus membrane. Its subcellular location is the cytoplasm. It carries out the reaction phosphoethanolamine + S-adenosyl-L-methionine = N-methylethanolamine phosphate + S-adenosyl-L-homocysteine + H(+). The enzyme catalyses N-methylethanolamine phosphate + S-adenosyl-L-methionine = N,N-dimethylethanolamine phosphate + S-adenosyl-L-homocysteine + H(+). It catalyses the reaction N,N-dimethylethanolamine phosphate + S-adenosyl-L-methionine = phosphocholine + S-adenosyl-L-homocysteine + H(+). It participates in phospholipid metabolism; phosphatidylcholine biosynthesis; phosphocholine from phosphoethanolamine. Inhibited by phosphocholine. Inhibited by hexadecylphosphocholine (miltefosine). Inhibited by S-adenosyl-l-homocysteine. Weakly inhibited in vitro by amodiaquine, chloroquine and primaquine. Inhibited by NSC-158011. In terms of biological role, catalyzes N-methylation of phosphoethanolamine, phosphomonomethylethanolamine and phosphodimethylethanolamine, the three methylation steps required to convert phosphoethanolamine to phosphocholine. Has no ethanolamine- or phosphatidylethanolamine-N-methyltransferase activity. Required for gametocyte development, maturation and transmission to mosquitoes and for oocyst formation in the mosquito midgut. The protein is Phosphoethanolamine N-methyltransferase of Plasmodium falciparum (isolate 3D7).